The chain runs to 494 residues: Ammonium transporter Rh type C (494 aa).

The Cytoplasmic portion of the chain corresponds to 1 to 22; that stretch reads MGNFIQGCKDYFSQQKNTNIRL. A helical membrane pass occupies residues 23–43; sequence TLPVVCFVWQIAMIILFGVFI. At 44–74 the chain is on the extracellular side; it reads RYDEESDTHWVETKAHDNITSDIENDFYFRY. N-linked (GlcNAc...) asparagine glycosylation is present at asparagine 61. Residues 75 to 95 form a helical membrane-spanning segment; sequence PSFQDVHVMIFVGFGFLMTFL. The Cytoplasmic portion of the chain corresponds to 96-99; that stretch reads KRYS. A helical transmembrane segment spans residues 100–120; the sequence is FGAVGFNFLIASFGLQWALLM. The Extracellular segment spans residues 121–133; sequence QGWFHSLDPQTGK. Residues 134–154 traverse the membrane as a helical segment; sequence IFIGVESLINADFCVAGCLIA. The Cytoplasmic portion of the chain corresponds to 155–166; sequence YGAVLGKVSPVQ. Residues 167–187 form a helical membrane-spanning segment; it reads LLVMTLFGVTLFAVEEYIILN. The Extracellular segment spans residues 188–194; sequence LLHARDA. A helical membrane pass occupies residues 195-215; sequence GGSMVIHTFGGYYGLTISWVL. Topologically, residues 216–234 are cytoplasmic; that stretch reads YRPNLHQSKRMQGSVYHSD. A helical membrane pass occupies residues 235–255; the sequence is IFAMIGTLFLWMFWPSFNSAI. The Extracellular segment spans residues 256 to 265; it reads TDHGDGQHRA. Residues 266 to 286 traverse the membrane as a helical segment; it reads VINTYLCLASTVLTTVAISSF. Residues 287 to 297 are Cytoplasmic-facing; the sequence is SQKTGKLDMVH. A helical membrane pass occupies residues 298-318; sequence IQNSTLAGGVALGTAAEFMIS. Proline 319 is a topological domain (extracellular). A helical membrane pass occupies residues 320–340; the sequence is YGALIVGFLCGIISTMGYIFI. Residues 341–358 lie on the Cytoplasmic side of the membrane; it reads SPFLEKTLKIQDTCGIHN. A helical membrane pass occupies residues 359–379; sequence LHAMPGVIGGIVGAITAAAAS. The Extracellular portion of the chain corresponds to 380 to 411; the sequence is ESVYGKHALINTFDFTGDFKDRTVLTQGGYQA. The helical transmembrane segment at 412–432 threads the bilayer; sequence AGMCVSIVFGVAGGAIVGSIL. Residues 433-494 lie on the Cytoplasmic side of the membrane; sequence KLPIWGDPAD…SNFSVEHCES (62 aa).

The protein belongs to the ammonium transporter (TC 2.A.49) family. Rh subfamily. As to quaternary structure, homotrimer.

Its subcellular location is the apical cell membrane. Functionally, functions as an ammonia transporter. May play a role in the elimination of ammonia in the gill. The polypeptide is Ammonium transporter Rh type C (rhcg) (Oncorhynchus mykiss (Rainbow trout)).